An 83-amino-acid polypeptide reads, in one-letter code: Small ribosomal subunit protein bS20 (83 aa).

The tract at residues 1–25 is disordered; sequence MPNIKSAIKRVNTTHTAEERNISQK. The span at 16 to 25 shows a compositional bias: basic and acidic residues; that stretch reads TAEERNISQK.

Belongs to the bacterial ribosomal protein bS20 family.

Functionally, binds directly to 16S ribosomal RNA. In Staphylococcus saprophyticus subsp. saprophyticus (strain ATCC 15305 / DSM 20229 / NCIMB 8711 / NCTC 7292 / S-41), this protein is Small ribosomal subunit protein bS20.